A 171-amino-acid chain; its full sequence is Secreted LysM effector Blys4 (171 aa).

The LysM domain maps to 125 to 169; sequence KPYTIHQGDTCWDIAESHSVGVDDILTLNPELDCDKLSIGSQICL.

This sequence belongs to the secreted LysM effector family.

Functionally, might have a role in sequestration of chitin oligosaccharides (breakdown products of fungal cell walls that are released during invasion and act as triggers of host immunity) to dampen host defense. The chain is Secreted LysM effector Blys4 from Beauveria bassiana (strain ARSEF 2860) (White muscardine disease fungus).